A 665-amino-acid polypeptide reads, in one-letter code: tRNA 5-methylaminomethyl-2-thiouridine biosynthesis bifunctional protein MnmC (665 aa).

The tRNA (mnm(5)s(2)U34)-methyltransferase stretch occupies residues Met-1–Ala-243. The FAD-dependent cmnm(5)s(2)U34 oxidoreductase stretch occupies residues Ile-268–Gln-665.

This sequence in the N-terminal section; belongs to the methyltransferase superfamily. tRNA (mnm(5)s(2)U34)-methyltransferase family. In the C-terminal section; belongs to the DAO family. FAD serves as cofactor.

It is found in the cytoplasm. The catalysed reaction is 5-aminomethyl-2-thiouridine(34) in tRNA + S-adenosyl-L-methionine = 5-methylaminomethyl-2-thiouridine(34) in tRNA + S-adenosyl-L-homocysteine + H(+). Its function is as follows. Catalyzes the last two steps in the biosynthesis of 5-methylaminomethyl-2-thiouridine (mnm(5)s(2)U) at the wobble position (U34) in tRNA. Catalyzes the FAD-dependent demodification of cmnm(5)s(2)U34 to nm(5)s(2)U34, followed by the transfer of a methyl group from S-adenosyl-L-methionine to nm(5)s(2)U34, to form mnm(5)s(2)U34. The polypeptide is tRNA 5-methylaminomethyl-2-thiouridine biosynthesis bifunctional protein MnmC (Aeromonas hydrophila subsp. hydrophila (strain ATCC 7966 / DSM 30187 / BCRC 13018 / CCUG 14551 / JCM 1027 / KCTC 2358 / NCIMB 9240 / NCTC 8049)).